A 96-amino-acid polypeptide reads, in one-letter code: RNA-binding protein Hfq (96 aa).

Positions 9–68 (DPYLNALRRERIPVSIYLVNGIKLQGQIESFDQFVILLKNTVNQMVYKHAISTVVPARSV) constitute a Sm domain. The segment at 65–96 (ARSVSHHNNPQQQQQHSQQTESAAPAAEPQAE) is disordered. The segment covering 70 to 96 (HHNNPQQQQQHSQQTESAAPAAEPQAE) has biased composition (low complexity).

The protein belongs to the Hfq family. As to quaternary structure, homohexamer.

Functionally, RNA chaperone that binds small regulatory RNA (sRNAs) and mRNAs to facilitate mRNA translational regulation in response to envelope stress, environmental stress and changes in metabolite concentrations. Also binds with high specificity to tRNAs. The chain is RNA-binding protein Hfq from Mannheimia succiniciproducens (strain KCTC 0769BP / MBEL55E).